Consider the following 192-residue polypeptide: Density-regulated protein homolog (192 aa).

A disordered region spans residues 62–116 (GLEISDEPAADGDEKKKQKRGGKGSKTGAAAAQAAASGGKKKGGGPQKVTLQREP). Positions 87-99 (KTGAAAAQAAASG) are enriched in low complexity. Residues 117 to 176 (RGKKSVTVIKGLATFDIDLKVASKLFAQKFACGSSVTGADEIVIQGDVKDDLLDLIPEKW) form the SUI1 domain.

Belongs to the DENR family.

This Caenorhabditis elegans protein is Density-regulated protein homolog.